The sequence spans 292 residues: 4-hydroxy-tetrahydrodipicolinate synthase (292 aa).

Pyruvate is bound at residue Thr45. Residue Tyr134 is the Proton donor/acceptor of the active site. Lys162 (schiff-base intermediate with substrate) is an active-site residue. Residue Val204 coordinates pyruvate.

Belongs to the DapA family. Homotetramer; dimer of dimers.

Its subcellular location is the cytoplasm. It carries out the reaction L-aspartate 4-semialdehyde + pyruvate = (2S,4S)-4-hydroxy-2,3,4,5-tetrahydrodipicolinate + H2O + H(+). The protein operates within amino-acid biosynthesis; L-lysine biosynthesis via DAP pathway; (S)-tetrahydrodipicolinate from L-aspartate: step 3/4. In terms of biological role, catalyzes the condensation of (S)-aspartate-beta-semialdehyde [(S)-ASA] and pyruvate to 4-hydroxy-tetrahydrodipicolinate (HTPA). The polypeptide is 4-hydroxy-tetrahydrodipicolinate synthase (Marinobacter nauticus (strain ATCC 700491 / DSM 11845 / VT8) (Marinobacter aquaeolei)).